The sequence spans 130 residues: Small ribosomal subunit protein uS11 (130 aa).

It belongs to the universal ribosomal protein uS11 family. As to quaternary structure, part of the 30S ribosomal subunit. Interacts with proteins S7 and S18. Binds to IF-3.

Its function is as follows. Located on the platform of the 30S subunit, it bridges several disparate RNA helices of the 16S rRNA. Forms part of the Shine-Dalgarno cleft in the 70S ribosome. This chain is Small ribosomal subunit protein uS11, found in Xanthomonas oryzae pv. oryzae (strain MAFF 311018).